A 377-amino-acid chain; its full sequence is N5-carboxyaminoimidazole ribonucleotide synthase (377 aa).

ATP is bound by residues R93, K133, 138–144, 175–178, E183, H206, and 257–258; these read GYDGKGQ, EEFV, and NE. The ATP-grasp domain maps to 97 to 287; it reads KALLDNAGVR…QFENHLRAVC (191 aa).

It belongs to the PurK/PurT family. As to quaternary structure, homodimer.

The catalysed reaction is 5-amino-1-(5-phospho-beta-D-ribosyl)imidazole + hydrogencarbonate + ATP = 5-carboxyamino-1-(5-phospho-D-ribosyl)imidazole + ADP + phosphate + 2 H(+). The protein operates within purine metabolism; IMP biosynthesis via de novo pathway; 5-amino-1-(5-phospho-D-ribosyl)imidazole-4-carboxylate from 5-amino-1-(5-phospho-D-ribosyl)imidazole (N5-CAIR route): step 1/2. Its function is as follows. Catalyzes the ATP-dependent conversion of 5-aminoimidazole ribonucleotide (AIR) and HCO(3)(-) to N5-carboxyaminoimidazole ribonucleotide (N5-CAIR). This is N5-carboxyaminoimidazole ribonucleotide synthase from Vibrio parahaemolyticus serotype O3:K6 (strain RIMD 2210633).